Here is a 78-residue protein sequence, read N- to C-terminus: Small integral membrane protein 1 (78 aa).

Residue M1 is modified to N-acetylmethionine. The disordered stretch occupies residues 1–22 (MQSQESGVHYSRWDSSSRDEVS). Residues 1–48 (MQSQESGVHYSRWDSSSRDEVSMTAMSSSEEASCYRRISQKLCSGKLG) are Cytoplasmic-facing. S6, S17, S22, and S27 each carry phosphoserine. Positions 11–21 (SRWDSSSRDEV) are enriched in basic and acidic residues. Residues 49 to 69 (IAMKVLGGVALFWIIFILGYI) form a helical; Signal-anchor for type II membrane protein membrane-spanning segment. The Extracellular portion of the chain corresponds to 70-78 (TGYYVHKCK).

This sequence belongs to the SMIM1 family. Homooligomer; disulfide-linked.

Its subcellular location is the cell membrane. Regulator of red blood cell formation. This is Small integral membrane protein 1 from Mus musculus (Mouse).